Here is a 131-residue protein sequence, read N- to C-terminus: Large ribosomal subunit protein uL24 (131 aa).

It belongs to the universal ribosomal protein uL24 family. Part of the 50S ribosomal subunit.

One of two assembly initiator proteins, it binds directly to the 5'-end of the 23S rRNA, where it nucleates assembly of the 50S subunit. Functionally, located at the polypeptide exit tunnel on the outside of the subunit. The sequence is that of Large ribosomal subunit protein uL24 from Korarchaeum cryptofilum (strain OPF8).